The sequence spans 292 residues: MPRSFLVKTHSSHRVPNYRRLETQREINGACSACGGLVVPLLPRDKEAPSVPGDLPQPWDRSSAVACISLPLLPRIEEALGASGLDALEVSEVDPRASRAAIVPLKDSLNHLNLPPLLVLPTRWSPTLGPDRHGAPEKLLGAERMPRAPGGFECFHCHKPYHTLAGLARHRQLHCHLQVGRVFTCKYCDKEYTSLGALKMHIRTHTLPCTCKICGKAFSRPWLLQGHVRTHTGEKPYACSHCSRAFADRSNLRAHLQTHSDAKKYRCRRCTKTFSRMSLLARHEESGCCPGP.

Residues 1-20 are SNAG domain; it reads MPRSFLVKTHSSHRVPNYRR. 4 consecutive C2H2-type zinc fingers follow at residues 152–174, 183–205, 209–231, and 237–259; these read FECF…RQLH, FTCK…IRTH, CTCK…VRTH, and YACS…LQTH. The C2H2-type 5; degenerate zinc-finger motif lies at 265-287; it reads YRCRRCTKTFSRMSLLARHEESG.

Belongs to the snail C2H2-type zinc-finger protein family.

It is found in the nucleus. In terms of biological role, seems to inhibit myoblast differentiation. Transcriptional repressor of E-box-dependent transactivation of downstream myogenic bHLHs genes. Binds preferentially to the canonical E-box sequences 5'-CAGGTG-3' and 5'-CACCTG-3'. The polypeptide is Zinc finger protein SNAI3 (SNAI3) (Homo sapiens (Human)).